A 138-amino-acid polypeptide reads, in one-letter code: Large ribosomal subunit protein uL16 (138 aa).

The segment covering 1-16 (MLIPRRVKHRKQHHPG) has biased composition (basic residues). The tract at residues 1–24 (MLIPRRVKHRKQHHPGRSGAATGG) is disordered.

Belongs to the universal ribosomal protein uL16 family. Part of the 50S ribosomal subunit.

Binds 23S rRNA and is also seen to make contacts with the A and possibly P site tRNAs. The sequence is that of Large ribosomal subunit protein uL16 from Paenarthrobacter aurescens (strain TC1).